The sequence spans 904 residues: MSGGSQVHIFWGAPVAPLKMTVSQDTASLMSVADPWKKIHLLYSQHSLYLKDEKQHKNLENYEVPESVGSPDFSGHFLANCMNRHVHVKDDFVRSVSETQNIESQNIHSSRLSDITSSNMQICGFKSTVPHLTEEEKYQKLLSENKIIDEQPKHQSDICGQNFNTNLFQLGHKCAAMLDLVCSTEQINIGPEVVQRECVSTEYHEIQNQCLGLFSSNAVDKSRSEAAVRKASDLKISTDTEFLSIITSSQVAFLAQKKDKGRSPINKGNVNMETEPKASYREIRIPEENSIQLDGFTEAYEGGQNQAYSLELFSPVCRKTENSRIHINSDKGLEEHIGSQELFNSEDKLPPNEIHIELCSSGILCSQLNTFHKSAIKRSCTSEDKVGQSEALSRVLQVAKKMKLISNGGDSAVEMDRRNVSEFKGIKKTSLIKNCDSKSQKYNCLVMVLSPCHVKEINIKFGPNSGSKVPLATVTVIDQSETKKKVFLWRTAAFWAFTVFLGDIILLTDVVIREDQWVGETVLQSTFSSQLLNLGSYSSIQPEEYSSVVSDVVLQDLLAYVSSKHSYLRDLPPRQPQRVNSIDFVELEHLQPDVLVHAVLRVVDFTILTEAVYSYRGQKQKKVMLTVEQAQDQHYVLVLWGPGAAWYPQLQRKKGYIWEFKYLFVQRNYTLENLELHTTPWSSCECLFNDDIRAITFKAKFQKSAPSFVKIPDLATHLEDKCSGVVLIQAQISELAFPITAAQKIALNAHSSLKSIFSSLPNIVYTGCAKCGLELETDENRIYKQCFSCLPFTMKKIYYRPALMTVVDGRHDVCIRVESKLIEKILLNISADCLNRVIVPSSEITYGMVVADLFHSLLAVSAEPCVLKIQSLFVLDENSYPLQQDFSLLDFYSDIVKHGADARL.

The interval 1-60 (MSGGSQVHIFWGAPVAPLKMTVSQDTASLMSVADPWKKIHLLYSQHSLYLKDEKQHKNLE) is sufficient for interaction with SHLD3 and MAD2L2. An interaction with ASTE1 region spans residues 1–568 (MSGGSQVHIF…AYVSSKHSYL (568 aa)). Residues 721–891 (KCSGVVLIQA…LQQDFSLLDF (171 aa)) form a mediates interaction with SHLD1 region.

It belongs to the SHLD2 family. Component of the shieldin complex, consisting of SHLD1, SHLD2, SHLD3 and MAD2L2/REV7. Within the complex, SHLD2 forms a scaffold which interacts with a SHLD3-MAD2L2 subcomplex via its N-terminus, and with SHLD1 via its C-terminus. Interacts with TP53BP1. Interacts with RIF1. Interacts with ASTE1.

It is found in the chromosome. Component of the shieldin complex, which plays an important role in repair of DNA double-stranded breaks (DSBs). During G1 and S phase of the cell cycle, the complex functions downstream of TP53BP1 to promote non-homologous end joining (NHEJ) and suppress DNA end resection. Mediates various NHEJ-dependent processes including immunoglobulin class-switch recombination, and fusion of unprotected telomeres. The protein is Shieldin complex subunit 2 of Pongo abelii (Sumatran orangutan).